Consider the following 253-residue polypeptide: Ras-like protein family member 11A-like (253 aa).

GTP contacts are provided by residues 43–50 (GASNVGKT), 90–97 (DTPCVSLQ), and 157–160 (NKSD). The interval 213–233 (GNGEKRKGGLHLARPKSPNMQ) is disordered.

Belongs to the small GTPase superfamily. Ras family.

The protein localises to the nucleus. It is found in the nucleolus. It catalyses the reaction GTP + H2O = GDP + phosphate + H(+). Functionally, regulator of rDNA transcription. The chain is Ras-like protein family member 11A-like from Danio rerio (Zebrafish).